A 653-amino-acid polypeptide reads, in one-letter code: NADH-ubiquinone oxidoreductase chain 5 (653 aa).

The next 16 membrane-spanning stretches (helical) occupy residues 1–21, 30–50, 81–103, 120–140, 177–197, 200–220, 241–261, 274–294, 301–319, 331–351, 365–385, 403–423, 452–472, 511–531, 610–630, and 631–651; these read MYLVIIFLPLLGSIISGFFGR, LITSSFIIITTMLAIFNFFEV, LTVSMLIPVLIVSSLVHIYSIGY, FTFMMIILVTANNYLLMFLGV, FLTIGMFIIIWSFGNLDYSTV, LAPYFNQEFITLIGICLLIGA, TPVSALIHAATMVTAGVYLLM, LILCLWLGAITTIFSSIIGLF, VIAYSTMSQLGMMVIAIGL, NHAFYKALLFLGAGAVIHSVS, FLPLAYSIMLIASLSLVAIPF, FYISSTLVYFIATIGAMFTTL, IFINLPLIILAIFSIFFGYLT, LLPLFFTITLSIIGIMFSEFF, GVITSYALYILIGLIFYVFLL, and YLNIDNNILLLLLFGIFSTIN.

This sequence belongs to the complex I subunit 5 family.

The protein localises to the mitochondrion inner membrane. It catalyses the reaction a ubiquinone + NADH + 5 H(+)(in) = a ubiquinol + NAD(+) + 4 H(+)(out). Functionally, core subunit of the mitochondrial membrane respiratory chain NADH dehydrogenase (Complex I) that is believed to belong to the minimal assembly required for catalysis. Complex I functions in the transfer of electrons from NADH to the respiratory chain. The immediate electron acceptor for the enzyme is believed to be ubiquinone. In Trichophyton rubrum (Athlete's foot fungus), this protein is NADH-ubiquinone oxidoreductase chain 5 (ND5).